Consider the following 311-residue polypeptide: Meteorin-like protein (311 aa).

A signal peptide spans 1–45 (MRGVVWAARRRAGQQWPRSPGPGPGPPPPPPLLLLLLLLLGGASA). C52 and C75 are disulfide-bonded. N-linked (GlcNAc...) asparagine glycosylation is present at N103. 4 disulfides stabilise this stretch: C107-C143, C188-C260, C191-C284, and C201-C306.

The protein belongs to the meteorin family. Abundantly expressed in adipose tissue.

It is found in the secreted. Its function is as follows. Hormone induced following exercise or cold exposure that promotes energy expenditure. Induced either in the skeletal muscle after exercise or in adipose tissue following cold exposure and is present in the circulation. Able to stimulate energy expenditure associated with the browning of the white fat depots and improves glucose tolerance. Does not promote an increase in a thermogenic gene program via direct action on adipocytes, but acts by stimulating several immune cell subtypes to enter the adipose tissue and activate their prothermogenic actions. Stimulates an eosinophil-dependent increase in IL4 expression and promotes alternative activation of adipose tissue macrophages, which are required for the increased expression of the thermogenic and anti-inflammatory gene programs in fat. Required for some cold-induced thermogenic responses, suggesting a role in metabolic adaptations to cold temperatures. This is Meteorin-like protein (Metrnl) from Rattus norvegicus (Rat).